The following is a 749-amino-acid chain: Transcription factor RFX3 (749 aa).

The RFX-type winged-helix DNA-binding region spans 183–258 (HLQWLLDNYE…YHYYGIRVKP (76 aa)).

This sequence belongs to the RFX family.

Its subcellular location is the nucleus. Functionally, transcription factor required for ciliogenesis and islet cell differentiation during endocrine pancreas development. This Xenopus tropicalis (Western clawed frog) protein is Transcription factor RFX3 (rfx3).